The chain runs to 373 residues: Probable jasmonic acid carboxyl methyltransferase 2 (373 aa).

Residue Y18 participates in S-adenosyl-L-homocysteine binding. Q25 contributes to the jasmonate binding site. C59, N64, D96, L97, S135, and F136 together coordinate S-adenosyl-L-homocysteine. Residues H156 and W157 each contribute to the jasmonate site. 4 residues coordinate Mg(2+): N174, D260, F262, and N263.

It belongs to the methyltransferase superfamily. Type-7 methyltransferase family. Requires Mg(2+) as cofactor.

Its subcellular location is the cytoplasm. The protein resides in the nucleus. The catalysed reaction is jasmonate + S-adenosyl-L-methionine = methyl (-)-jasmonate + S-adenosyl-L-homocysteine. Its pathway is lipid metabolism; oxylipin biosynthesis. In terms of biological role, catalyzes the methylation of jasmonate into methyljasmonate, a plant volatile that acts as an important cellular regulator mediating diverse developmental processes and defense responses. In Theobroma cacao (Cacao), this protein is Probable jasmonic acid carboxyl methyltransferase 2.